Reading from the N-terminus, the 456-residue chain is Adenylosuccinate synthetase isozyme 1 (456 aa).

The interval 1–30 (MSSGWSQNDHRSYSNPPPVSGKRPRNDSGN) is disordered. GTP is bound by residues 41–47 (GDEGKGK) and 69–71 (GHT). Asp42 functions as the Proton acceptor in the catalytic mechanism. Mg(2+) is bound by residues Asp42 and Gly69. Position 42 (Asp42) interacts with substrate. IMP is bound by residues 42–45 (DEGK) and 67–70 (NAGH). The active-site Proton donor is the His70. Ser130 carries the phosphoserine modification. IMP is bound by residues Thr162, Arg176, Asn255, Thr270, and Arg334. 330–336 (VTTGRKR) is a binding site for substrate. GTP is bound by residues Arg336, 362–364 (KLD), and 444–447 (GVGK).

Belongs to the adenylosuccinate synthetase family. In terms of assembly, homodimer. Mg(2+) is required as a cofactor.

It localises to the cytoplasm. The enzyme catalyses IMP + L-aspartate + GTP = N(6)-(1,2-dicarboxyethyl)-AMP + GDP + phosphate + 2 H(+). Its pathway is purine metabolism; AMP biosynthesis via de novo pathway; AMP from IMP: step 1/2. Component of the purine nucleotide cycle (PNC), which interconverts IMP and AMP to regulate the nucleotide levels in various tissues, and which contributes to glycolysis and ammoniagenesis. Catalyzes the first committed step in the biosynthesis of AMP from IMP. The sequence is that of Adenylosuccinate synthetase isozyme 1 (adss1) from Danio rerio (Zebrafish).